The following is a 398-amino-acid chain: Streptopain (398 aa).

The N-terminal stretch at 1 to 27 is a signal peptide; that stretch reads MNKKKLGIRLLSLLALGGFVLANPVFA. A propeptide spanning residues 28–145 is cleaved from the precursor; sequence DQNFARNEKE…TTYAGTAEIK (118 aa). Cysteine 192 serves as the catalytic Nucleophile. Position 192 is a cysteine methyl disulfide; in zymogen form (cysteine 192). A protein contacts are provided by serine 282 and glycine 339. Histidine 340 functions as the Proton acceptor in the catalytic mechanism. Positions 368–390 are C-terminal active site loop; sequence RLDALNPSALGTGGGAGGFNGYQ.

This sequence belongs to the peptidase C10 family. As to quaternary structure, monomer. Post-translationally, the mature protease is derived from the precursor sequence by cleavage, either in cis via an autocatalytic mechanism, or in trans by mature SpeB or host proteases (trypsin, plasmin or subtilisin). Maturation can involve a number of protein cleavage intermediates. Mature SpeB probably plays the most important role in protein maturation in physiological conditions. In terms of processing, methylthiolation at Cys-192 of the inactive zymogen form is probably involved in the mechanism of secretion of the proteinase into the culture fluid.

Its subcellular location is the secreted. It localises to the host extracellular space. The protein resides in the host cytoplasm. It catalyses the reaction Preferential cleavage with hydrophobic residues at P2, P1 and P1'.. Its activity is regulated as follows. Synthesized as an inactive zymogen to protect the intracellular components of the bacteria from proteolytic activity during protein production. Once secreted into the extracellular milieu, cleaved into the active protease: maturation can be mediated in cis by autocatalytic cleavage, or in trans by mature SpeB or host proteases. Protease activity is strongly inhibited by zinc and copper, which prevent its maturation into an active protease: inhibition by metal ions may be required to prevent proteolysis of streptococcal proteins. Its function is as follows. Cysteine protease that acts as a key streptococcal virulence factor by cleaving host proteins involved in immune response. Triggers inflammation by mediating cleavage of host proteins, which can both promote host pathogenesis by triggering sterile inflammation and/or restrict streptococcal infection, depending on host immune statue and infection site. Cleaves host gasdermin-A (GSDMA) in epithelial cells, promoting GSDMA activation and formation of gasdermin pores, triggering pyroptosis. Pyroptosis triggers the elimination of the infected skin cell, depriving the pathogen of its protective niche, while inducing an inflammatory response. This ultimately prevents bacterial penetration of the epithelial barrier and a subsequent systemic dissemination of the pathogen. Also mediates cleavage of the cytokine precursor interleukin-1 beta (IL1B) to its mature form, resulting in inflammation and septic shock. SpeB-mediated maturation of IL1B plays a dual role depending on infection site: while IL1B inflammatory response prevents bacterial growth during invasive skin infections, it promotes streptococcal infection of the nasopharynx by disrupting colonization resistance mediated by the microbiota. Inhibits host autophagy be catalyzing cleavage and inactivation of key autophagy factors, such as CALCOCO2, NBR1 and SQSTM1. Cleaves and inhibits a number of complement factors, such as C2, C3-beta chain of C3, C4, C5 or SERPING1, thereby promoting evasion of host immunity. May also impair adaptive immunity by catalyzing cleavage and degradation of host immunoglobulins to promote immune system evasion; the relevance of this activity is however unsure in vivo. Catalyzes maturation and release of the peptide hormone bradykinin from the precursor Kininogen-1 (KNG1) to produce hypotension during septic shock. Also involved in bacterial translocation across the host epithelial barrier by mediating cleavage and degradation of host epithelial junction proteins, such as CDH1 and OCLN. Additionally, has been involved in degradation of fibronectin and vitronectin, two host extracellular matrix proteins involved in tissue integrity. Also able to catalyze cleavage and degradation of streptococcal proteins, such as C5a peptidase, EndoS or SmeZ. Degradation of streptococcal proteins is however strictly regulated to preserve integrity of other virulence factors. The protein is Streptopain (speB) of Streptococcus pyogenes serotype M3 (strain ATCC BAA-595 / MGAS315).